The primary structure comprises 301 residues: Methionine aminopeptidase (301 aa).

Residue His65 participates in substrate binding. Residues Asp85, Asp96, and His156 each coordinate a divalent metal cation. His164 is a binding site for substrate. A divalent metal cation is bound by residues Glu189 and Glu284.

It belongs to the peptidase M24A family. Methionine aminopeptidase archaeal type 2 subfamily. In terms of assembly, monomer. Co(2+) serves as cofactor. Requires Zn(2+) as cofactor. Mn(2+) is required as a cofactor. The cofactor is Fe(2+).

The catalysed reaction is Release of N-terminal amino acids, preferentially methionine, from peptides and arylamides.. Removes the N-terminal methionine from nascent proteins. The N-terminal methionine is often cleaved when the second residue in the primary sequence is small and uncharged (Met-Ala-, Cys, Gly, Pro, Ser, Thr, or Val). This Saccharolobus solfataricus (strain ATCC 35092 / DSM 1617 / JCM 11322 / P2) (Sulfolobus solfataricus) protein is Methionine aminopeptidase.